Here is a 476-residue protein sequence, read N- to C-terminus: Bifunctional protein HldE (476 aa).

The ribokinase stretch occupies residues 1–319; that stretch reads MKVSLPAFEK…EALALHHGES (319 aa). 195-198 is an ATP binding site; sequence NMSE. D264 is an active-site residue. The interval 345–476 is cytidylyltransferase; the sequence is MTNGCFDILH…AIIQNIMANQ (132 aa).

It in the N-terminal section; belongs to the carbohydrate kinase PfkB family. The protein in the C-terminal section; belongs to the cytidylyltransferase family. In terms of assembly, homodimer.

It carries out the reaction D-glycero-beta-D-manno-heptose 7-phosphate + ATP = D-glycero-beta-D-manno-heptose 1,7-bisphosphate + ADP + H(+). The enzyme catalyses D-glycero-beta-D-manno-heptose 1-phosphate + ATP + H(+) = ADP-D-glycero-beta-D-manno-heptose + diphosphate. Its pathway is nucleotide-sugar biosynthesis; ADP-L-glycero-beta-D-manno-heptose biosynthesis; ADP-L-glycero-beta-D-manno-heptose from D-glycero-beta-D-manno-heptose 7-phosphate: step 1/4. It functions in the pathway nucleotide-sugar biosynthesis; ADP-L-glycero-beta-D-manno-heptose biosynthesis; ADP-L-glycero-beta-D-manno-heptose from D-glycero-beta-D-manno-heptose 7-phosphate: step 3/4. Functionally, catalyzes the phosphorylation of D-glycero-D-manno-heptose 7-phosphate at the C-1 position to selectively form D-glycero-beta-D-manno-heptose-1,7-bisphosphate. Its function is as follows. Catalyzes the ADP transfer from ATP to D-glycero-beta-D-manno-heptose 1-phosphate, yielding ADP-D-glycero-beta-D-manno-heptose. The polypeptide is Bifunctional protein HldE (Shewanella baltica (strain OS195)).